The primary structure comprises 195 residues: Protease (195 aa).

The Peptidase A2 domain maps to 71–149 (ALMLVDTGAE…DKWQILGRDV (79 aa)). The active site involves Asp-76.

This chain is Protease, found in Bos taurus (Bovine).